Reading from the N-terminus, the 187-residue chain is Tetraheme c-type cytochrome CymA (187 aa).

The Cytoplasmic segment spans residues 1–12 (MNWRALFKPSAK). Residues 13-33 (YSILALLVVGIVIGVVGYFAT) form a helical membrane-spanning segment. Topologically, residues 34 to 187 (QQTLHATSTD…KGVAHPYPKG (154 aa)) are periplasmic. Residues Cys46, Cys49, His64, Cys75, Cys78, His79, Asp97, Cys136, Cys139, His140, Cys173, Cys176, His177, and His182 each coordinate heme c.

It belongs to the NapC/NirT/NrfH family. As to quaternary structure, homodimer. Heme c is required as a cofactor.

The protein resides in the cell inner membrane. It carries out the reaction a quinol + 2 Fe(III)-[cytochrome c](out) = a quinone + 2 Fe(II)-[cytochrome c](out) + 2 H(+)(out). With respect to regulation, spectroscopic studies suggest that CymA requires a non-heme cofactor for quinol oxidation. Functionally, quinol dehydrogenase involved in several anaerobic electron transfer pathways. Acquires electrons from the membrane quinone pool and mediates their transfer to several periplasmic terminal reductases and redox shuttles, including the fumarate reductase FccA, the small tetraheme cytochrome (STC), the c-type cytochrome MtrA, the nitrate reductase NapA (either through NapB or directly), the nitrite reductase NrfA and probably also the DmsE subunit of dimethyl sulfoxide (DMSO) reductase. Required for growth on fumarate and on DMSO, and for the reduction of iron(III), manganese(IV), nitrite and nitrate. Not essential for growth on trimethylamine-N-oxide (TMAO). In Shewanella oneidensis (strain ATCC 700550 / JCM 31522 / CIP 106686 / LMG 19005 / NCIMB 14063 / MR-1), this protein is Tetraheme c-type cytochrome CymA.